Here is a 34-residue protein sequence, read N- to C-terminus: Photosystem II reaction center protein Psb30 (34 aa).

Residues 7 to 27 form a helical membrane-spanning segment; the sequence is VAQLISLFLILTSGPAIIVLI.

This sequence belongs to the Psb30/Ycf12 family. In terms of assembly, PSII is composed of 1 copy each of membrane proteins PsbA, PsbB, PsbC, PsbD, PsbE, PsbF, PsbH, PsbI, PsbJ, PsbK, PsbL, PsbM, PsbT, PsbX, PsbY, PsbZ, Psb30/Ycf12, peripheral proteins of the oxygen-evolving complex and a large number of cofactors. It forms dimeric complexes.

It is found in the plastid. The protein localises to the chloroplast thylakoid membrane. Functionally, a core subunit of photosystem II (PSII), probably helps stabilize the reaction center. This chain is Photosystem II reaction center protein Psb30, found in Rhodomonas salina (Cryptomonas salina).